A 246-amino-acid polypeptide reads, in one-letter code: Phosphomannomutase (246 aa).

Catalysis depends on D13, which acts as the Nucleophile. Residues D13 and D15 each contribute to the Mg(2+) site. The active-site Proton donor/acceptor is the D15. Residues R22, R124, R135, R142, S180, and D182 each coordinate alpha-D-mannose 1-phosphate. Mg(2+)-binding residues include D208, Y220, and T225.

Belongs to the eukaryotic PMM family. As to quaternary structure, homodimer. The cofactor is Mg(2+). In terms of tissue distribution, expressed in roots, stems, leaves, flowers and immature fruits.

The protein localises to the cytoplasm. It catalyses the reaction alpha-D-mannose 1-phosphate = D-mannose 6-phosphate. Its pathway is nucleotide-sugar biosynthesis; GDP-alpha-D-mannose biosynthesis; alpha-D-mannose 1-phosphate from D-fructose 6-phosphate: step 2/2. Its function is as follows. Catalyzes the interconversion of mannose-6-phosphate to mannose-1-phosphate, the precursor for the synthesis of GDP-mannose. GDP-mannose is an essential sugar nucleotide for the synthesis of D-mannose-containing cell wall polysaccharides (galactomannans and glucomannans), glycolipids, glycoproteins and the antioxidant L-ascorbate. Can complement the yeast temperature-sensitive mutant sec53-6. The sequence is that of Phosphomannomutase from Arabidopsis thaliana (Mouse-ear cress).